Consider the following 603-residue polypeptide: uncharacterized protein (603 aa).

The segment covering 496-513 has biased composition (acidic residues); that stretch reads EEEDQEEDDTSDDDDQEK. Disordered stretches follow at residues 496 to 536 and 549 to 568; these read EEED…GSLE and AVAEQDRKKTQKKHKIDTAQ. Over residues 517–533 the composition is skewed to polar residues; that stretch reads NPQNNIGSLTRTPSSPG.

It belongs to the herpesviridae US22 family.

This is an uncharacterized protein from Human cytomegalovirus (strain AD169) (HHV-5).